A 215-amino-acid polypeptide reads, in one-letter code: 3-demethoxyubiquinol 3-hydroxylase (215 aa).

Residues Glu-64, Glu-94, His-97, Glu-146, Glu-178, and His-181 each coordinate Fe cation.

This sequence belongs to the COQ7 family. It depends on Fe cation as a cofactor.

The protein resides in the cell membrane. The catalysed reaction is a 5-methoxy-2-methyl-3-(all-trans-polyprenyl)benzene-1,4-diol + AH2 + O2 = a 3-demethylubiquinol + A + H2O. Its pathway is cofactor biosynthesis; ubiquinone biosynthesis. Catalyzes the hydroxylation of 2-nonaprenyl-3-methyl-6-methoxy-1,4-benzoquinol during ubiquinone biosynthesis. The polypeptide is 3-demethoxyubiquinol 3-hydroxylase (Pseudomonas fluorescens (strain ATCC BAA-477 / NRRL B-23932 / Pf-5)).